Reading from the N-terminus, the 270-residue chain is Undecaprenyl-diphosphatase (270 aa).

A run of 8 helical transmembrane segments spans residues 1-21 (MDLFNAAILALIQGITEFLPI), 39-59 (QGLVFDIAANSGSLAAVMLYF), 87-107 (SHLVLQLALATIPVGLVGLAC), 114-134 (VARDPMIIATTSILFGLLLWW), 147-167 (ALSWRQVGIIGIAQAFALIPG), 193-213 (FLMAIPVGILAALLDLKDLFA), 223-243 (FLGVGFCVSGLSAYMVIHGLL), and 250-270 (TMTPFVVYRVVLGVVIFATLG).

This sequence belongs to the UppP family.

It is found in the cell inner membrane. The catalysed reaction is di-trans,octa-cis-undecaprenyl diphosphate + H2O = di-trans,octa-cis-undecaprenyl phosphate + phosphate + H(+). Functionally, catalyzes the dephosphorylation of undecaprenyl diphosphate (UPP). Confers resistance to bacitracin. The chain is Undecaprenyl-diphosphatase from Magnetococcus marinus (strain ATCC BAA-1437 / JCM 17883 / MC-1).